A 310-amino-acid polypeptide reads, in one-letter code: MRPAPRWTGRTDGTTDEHLRWHQVVAPYAPGAEPNSCVFVGFASDEGVRRNKGRVGAAAGPDALRQAMAPMALDRPRRAYDAGTVEVVGEALEEGQRALGGTVAGLLDAGHFPVVFGGGHEIAYGTYLGVAGSSRRAPGTRLGILNLDAHFDLRADPVPSSGTPFRQILAAEGDAVRYAVLGISQPSNTAALFDTAARFGVRHLPDDECDPATALAFVDAFLAEIDLVYLTIDLDVLPAAVAPGVSAPAAFGVPLPTLQAVCDRVSASGKLAVVDVAELNPGLDIDNRTARTAARLIHRIVTRHVPVPAG.

Mn(2+)-binding residues include His120, Asp148, His150, Asp152, Asp233, and Asp235.

It belongs to the arginase family. Requires Mn(2+) as cofactor.

It carries out the reaction N-formimidoyl-L-glutamate + H2O = formamide + L-glutamate. The protein operates within amino-acid degradation; L-histidine degradation into L-glutamate; L-glutamate from N-formimidoyl-L-glutamate (hydrolase route): step 1/1. Its function is as follows. Catalyzes the conversion of N-formimidoyl-L-glutamate to L-glutamate and formamide. In Nocardia farcinica (strain IFM 10152), this protein is Formimidoylglutamase.